The sequence spans 172 residues: Putative phosphoesterase BCG9842_B4061 (172 aa).

The Proton donor role is filled by H34. 2 consecutive short sequence motifs (HXTX) follow at residues 34-37 (HITL) and 115-118 (HLTI). H115 acts as the Proton acceptor in catalysis.

Belongs to the 2H phosphoesterase superfamily. YjcG family.

The chain is Putative phosphoesterase BCG9842_B4061 from Bacillus cereus (strain G9842).